The sequence spans 223 residues: uncharacterized protein (223 aa).

5 helical membrane passes run leucine 28–threonine 48, leucine 59–alanine 79, alanine 88–isoleucine 108, isoleucine 128–serine 148, and alanine 176–valine 196.

The protein resides in the cell membrane. This is an uncharacterized protein from Mycoplasma pneumoniae (strain ATCC 29342 / M129 / Subtype 1) (Mycoplasmoides pneumoniae).